The following is a 517-amino-acid chain: L-amino-acid oxidase (517 aa).

Residues 1 to 18 (MNVFFMFSLLFLAALESC) form the signal peptide. Cys29 and Cys192 are joined by a disulfide. FAD contacts are provided by residues 62 to 63 (MA), 82 to 83 (EA), Arg90, and 106 to 109 (GPMR). Residue Arg109 coordinates substrate. The N-linked (GlcNAc...) asparagine glycan is linked to Asn191. Position 280 (Val280) interacts with FAD. A disulfide bridge links Cys350 with Cys431. A substrate-binding site is contributed by Tyr391. Residues Glu476 and 483–488 (GWIDST) each bind FAD. Position 483–484 (483–484 (GW)) interacts with substrate.

This sequence belongs to the flavin monoamine oxidase family. FIG1 subfamily. Homodimer; non-covalently linked. FAD is required as a cofactor. Post-translationally, N-glycosylated. In terms of tissue distribution, expressed by the venom gland.

It localises to the secreted. The catalysed reaction is an L-alpha-amino acid + O2 + H2O = a 2-oxocarboxylate + H2O2 + NH4(+). Its function is as follows. Catalyzes an oxidative deamination of predominantly hydrophobic and aromatic L-amino acids, thus producing hydrogen peroxide that may contribute to the diverse toxic effects of this enzyme. Exhibits diverse biological activities, such as hemorrhage, hemolysis, edema, apoptosis of vascular endothelial cells or tumor cell lines, antibacterial and antiparasitic activities, as well as regulation of platelet aggregation. Its effect on platelets is controversial, since it either induces aggregation or inhibits agonist-induced aggregation. These different effects are probably due to different experimental conditions. The protein is L-amino-acid oxidase of Demansia vestigiata (Lesser black whip snake).